A 64-amino-acid chain; its full sequence is Anti-sigma-G factor Gin (64 aa).

4 residues coordinate Zn(2+): Cys-11, Cys-14, Cys-30, and Cys-33.

In terms of assembly, probably functions as a homodimer. Interacts with sigma-G factor, recognition occurs via the first 71 residues of sigma-G. Requires Zn(2+) as cofactor.

In terms of biological role, an anti-sigma-G factor, prevents premature activation of sigma-G factor in the forespore; overexpression leads to 1000-fold reduction in spore formation, spore formation stops after engulfment. Overexpression also inhibits sigma-G transcription activation activity. When both Gin and sigma-G are expressed in E.coli Gin inhibits sigma-G, strongly suggesting Gin inhibits by direct physical interaction. In Bacillus subtilis (strain 168), this protein is Anti-sigma-G factor Gin.